The sequence spans 607 residues: MNLEELKKRQGKIRNFSIIAHIDHGKSTLADRILEKTETVSSREMQAQLLDSMDLERERGITIKLNAIELNYTAKDGETYIFHLIDTPGHVDFTYEVSRSLAACEGAILVVDAAQGIEAQTLANVYLALDNDLEIMPIINKIDLPAADPESVRTEIEDVIGLDASEAVLASAKAGIGIEEILEQIVEKVPAPTGDVTAPLKALIFDSVYDAYRGVILQVRVMDGVVKPGDKIQLMSNSKTFDVAEVGIFTPKAVGRDFLATGDVGYIAASIKTVQDTRVGDTVTLATNPAAEPLHGYKQMNPMVFAGLYPIESNKYNDLREALEKLQLNDASLQFEPETSQALGFGFRCGFLGLLHMDVIQERLEREFNIDLIMTAPSVIYKVNLTDGESMDVSNPSEFPDPTKIATIEEPYVKAQIMVPQEFVGAVMELAQRKRGDFVTMDYIDDNRVNVIYQIPLAEIVFDFFDKLKSSTRGYASFDYELSEYRPSKLVKMDILLNGDKVDALSFIVHKDFAYERGKLIVDKLKKIIPRQQFEVPIQAAIGHKIVARTDIKALRKNVLAKCYGGDVSRKRKLLEKQKAGKKRMKSIGSVEVPQEAFLSVLSMDEE.

The region spanning 11–193 (GKIRNFSIIA…QIVEKVPAPT (183 aa)) is the tr-type G domain. GTP contacts are provided by residues 23–28 (DHGKST) and 140–143 (NKID).

Belongs to the TRAFAC class translation factor GTPase superfamily. Classic translation factor GTPase family. LepA subfamily.

The protein localises to the cell membrane. It catalyses the reaction GTP + H2O = GDP + phosphate + H(+). Required for accurate and efficient protein synthesis under certain stress conditions. May act as a fidelity factor of the translation reaction, by catalyzing a one-codon backward translocation of tRNAs on improperly translocated ribosomes. Back-translocation proceeds from a post-translocation (POST) complex to a pre-translocation (PRE) complex, thus giving elongation factor G a second chance to translocate the tRNAs correctly. Binds to ribosomes in a GTP-dependent manner. The protein is Elongation factor 4 of Streptococcus pneumoniae (strain JJA).